The sequence spans 583 residues: MALLQTSLIWAVYAIVVAILAAVASVFIYTYQTPRDRCPSVILTCIVAVTTLLATVLLVPVDVALVSSTINPALGRRQDWATQSEVDRILLCLKIVYYFLYSLDALLCLIVIPFIYFLYEEYDEVASETEQQSFGQRFWAAFKYTVSFLAIVVVLFLVGFFVPVAKDGDGGGLDYFKHLLTENRGERALTFALGLLITIGLCLYVLYTSTGLALFPITLIKEGPSVISPTLKATTAVQLCSNRERQRQLEGRCRGNPGLLSSKDRRELDTLVREERTLIRRQRLADEAHGKHQNWLMQLWLKFGAIFRPFQLLSGVIFSLLALIIWISMLLTTIDKAKNSFCKQRCGYILGHINVFNPINWVFVQSAKIFPVDYVIFTLLVLFLFSSSIVGISAVGIRFLWIRIFQIRKGHTSPQALLLATAMLMLIILALNYSTSMILAPQYATYGPQTFCDRELSFSEKQPDCSRDKHLIRPCSEVADSLAAKQVCTPSVVSTFLNRVTMNFPFFGAIFFWAQFAFLGIYLLVMVTALLHSPKLDERQLDEDAEEAEEESLLANTRGRAETTWEDITSRLRRQNEVDRAGA.

Transmembrane regions (helical) follow at residues L8–I28, V41–V61, I95–I115, T145–A165, A188–T208, L312–T332, G347–A367, V375–V395, L418–I438, and F506–M526. Residues L541–S552 show a composition bias toward acidic residues. Residues L541–E562 are disordered.

The protein belongs to the LIMR family. LMBRD1 subfamily.

The protein resides in the lysosome membrane. Functionally, probable lysosomal cobalamin transporter. Required to export cobalamin from lysosomes allowing its conversion to cofactors. The protein is Probable lysosomal cobalamin transporter of Aspergillus oryzae (strain ATCC 42149 / RIB 40) (Yellow koji mold).